A 427-amino-acid chain; its full sequence is Enolase (427 aa).

(2R)-2-phosphoglycerate is bound at residue Gln163. Glu205 (proton donor) is an active-site residue. 3 residues coordinate Mg(2+): Asp242, Glu285, and Asp312. (2R)-2-phosphoglycerate contacts are provided by Lys337, Arg366, Ser367, and Lys388. Lys337 acts as the Proton acceptor in catalysis.

The protein belongs to the enolase family. Mg(2+) is required as a cofactor.

Its subcellular location is the cytoplasm. It localises to the secreted. The protein localises to the cell surface. It catalyses the reaction (2R)-2-phosphoglycerate = phosphoenolpyruvate + H2O. It functions in the pathway carbohydrate degradation; glycolysis; pyruvate from D-glyceraldehyde 3-phosphate: step 4/5. Its function is as follows. Catalyzes the reversible conversion of 2-phosphoglycerate (2-PG) into phosphoenolpyruvate (PEP). It is essential for the degradation of carbohydrates via glycolysis. In Methylocella silvestris (strain DSM 15510 / CIP 108128 / LMG 27833 / NCIMB 13906 / BL2), this protein is Enolase.